The following is a 405-amino-acid chain: Cytoplasmic 60S subunit biogenesis factor ZNF622 (405 aa).

U1-type zinc fingers lie at residues 4–28 (YTCITCRVAFKDADIQRAHYKTDWH) and 67–91 (TYCTVCSKRFSTFNAYENHLKSKKH). Residues 135–230 (AIRAQPSSSP…GVEEEEEKQA (96 aa)) are disordered. Positions 194–228 (AEEEEDSEEGWEEMDSDEDLGSEEEMEGVEEEEEK) are enriched in acidic residues.

This sequence belongs to the REI1 family. In terms of assembly, homo- and heterodimer. Associates with pre-60S ribosomal particles. In terms of tissue distribution, mainly expressed in the ovary. Mainly expressed in the testis.

It is found in the cytoplasm. The protein localises to the nucleus. Pre-60S-associated cytoplasmic factor involved in the cytoplasmic maturation of the 60S subunit. The sequence is that of Cytoplasmic 60S subunit biogenesis factor ZNF622 (ZNF622) from Gallus gallus (Chicken).